Here is a 620-residue protein sequence, read N- to C-terminus: Long-chain fatty acid transport protein 2 (620 aa).

The Lumenal segment spans residues 1–4; sequence MLPV. Residues 5–27 form a helical membrane-spanning segment; sequence LYTGLAGLLLLPLLLTCCCPYLL. Residues 28–106 lie on the Cytoplasmic side of the membrane; sequence QDVRFFLQLA…DHLGLRQGDC (79 aa). The chain crosses the membrane as a helical span at residues 107–127; that stretch reads VALFMGNEPAYVWLWLGLLKL. Residues 128–267 are Lumenal-facing; the sequence is GCPMACLNYN…DVIYTTMPLY (140 aa). 222–233 is an AMP binding site; the sequence is YIYTSGTTGLPK. The chain crosses the membrane as a helical span at residues 268–288; that stretch reads HSAALMIGLHGCIVVGATFAL. Residues 289 to 620 lie on the Cytoplasmic side of the membrane; sequence RSKFSASQFW…NAIIDKTLKL (332 aa). Residue lysine 291 is modified to N6-acetyllysine. Threonine 577 carries the phosphothreonine modification.

The protein belongs to the ATP-dependent AMP-binding enzyme family. In terms of tissue distribution, liver and kidney (at protein level).

It localises to the endoplasmic reticulum membrane. It is found in the peroxisome membrane. The protein localises to the cell membrane. Its subcellular location is the microsome. It catalyses the reaction a fatty acid(in) = a fatty acid(out). The enzyme catalyses (9Z)-octadecenoate(out) = (9Z)-octadecenoate(in). The catalysed reaction is a long-chain fatty acid + ATP + CoA = a long-chain fatty acyl-CoA + AMP + diphosphate. It carries out the reaction (5Z,8Z,11Z,14Z)-eicosatetraenoate + ATP + CoA = (5Z,8Z,11Z,14Z)-eicosatetraenoyl-CoA + AMP + diphosphate. It catalyses the reaction (9Z,12Z,15Z)-octadecatrienoate + ATP + CoA = (9Z,12Z,15Z)-octadecatrienoyl-CoA + AMP + diphosphate. The enzyme catalyses hexadecanoate + ATP + CoA = hexadecanoyl-CoA + AMP + diphosphate. The catalysed reaction is (9Z)-octadecenoate + ATP + CoA = (9Z)-octadecenoyl-CoA + AMP + diphosphate. It carries out the reaction 2,6,10,14-tetramethylpentadecanoate + ATP + CoA = pristanoyl-CoA + AMP + diphosphate. It catalyses the reaction (E)-hexadec-2-enoate + ATP + CoA = (2E)-hexadecenoyl-CoA + AMP + diphosphate. The enzyme catalyses 3,7,11,15-tetramethylhexadecanoate + ATP + CoA = phytanoyl-CoA + AMP + diphosphate. The catalysed reaction is a very long-chain fatty acid + ATP + CoA = a very long-chain fatty acyl-CoA + AMP + diphosphate. It carries out the reaction tetracosanoate + ATP + CoA = tetracosanoyl-CoA + AMP + diphosphate. It catalyses the reaction (4Z,7Z,10Z,13Z,16Z,19Z)-docosahexaenoate + ATP + CoA = (4Z,7Z,10Z,13Z,16Z,19Z)-docosahexaenoyl-CoA + AMP + diphosphate. The enzyme catalyses (25R)-3alpha,7alpha,12alpha-trihydroxy-5beta-cholestan-26-oate + ATP + CoA = (25R)-3alpha,7alpha,12alpha-trihydroxy-5beta-cholestan-26-oyl-CoA + AMP + diphosphate. In terms of biological role, mediates the import of long-chain fatty acids (LCFA) into the cell by facilitating their transport across cell membranes, playing an important role in hepatic fatty acid uptake. Also functions as an acyl-CoA ligase catalyzing the ATP-dependent formation of fatty acyl-CoA using LCFA and very-long-chain fatty acids (VLCFA) as substrates, which prevents fatty acid efflux from cells and might drive more fatty acid uptake. Plays a pivotal role in regulating available LCFA substrates from exogenous sources in tissues undergoing high levels of beta-oxidation or triglyceride synthesis. Can also activate branched-chain fatty acids such as phytanic acid and pristanic acid. May contribute to the synthesis of sphingosine-1-phosphate. Does not activate C24 bile acids, cholate and chenodeoxycholate. In vitro, activates 3-alpha,7-alpha,12-alpha-trihydroxy-5-beta-cholestanate (THCA), the C27 precursor of cholic acid deriving from the de novo synthesis from cholesterol. However, it is not critical for THCA activation and bile synthesis in vivo. This is Long-chain fatty acid transport protein 2 (Slc27a2) from Rattus norvegicus (Rat).